A 255-amino-acid chain; its full sequence is uncharacterized protein (255 aa).

Residues 4 to 72 (DPYSVLGVEK…KRRKHYDKTG (69 aa)) form the J domain. Basic residues-rich tracts occupy residues 167–178 (FAPNEKKRKRRA) and 243–255 (TKPK…RSKE). 2 disordered regions span residues 167–215 (FAPN…EEAL) and 230–255 (LISN…RSKE).

The protein belongs to the DnaJ family.

Its subcellular location is the nucleus. It is found in the nucleolus. This is an uncharacterized protein from Schizosaccharomyces pombe (strain 972 / ATCC 24843) (Fission yeast).